The chain runs to 519 residues: Aldehyde dehydrogenase, mitochondrial (519 aa).

Residues 1 to 19 constitute a mitochondrion transit peptide; that stretch reads MLRAALSTARRGPRLSRLL. Residues 12 to 26 carry the SIFI-degron motif; sequence GPRLSRLLSAAATSA. Lysine 54, lysine 75, lysine 80, and lysine 161 each carry N6-acetyllysine. 264 to 269 contributes to the NAD(+) binding site; it reads GSTEVG. Glutamate 287 functions as the Proton acceptor in the catalytic mechanism. The Nucleophile role is filled by cysteine 321. An N6-acetyllysine mark is found at lysine 370, lysine 377, lysine 385, lysine 409, lysine 428, lysine 430, lysine 443, and lysine 453.

Belongs to the aldehyde dehydrogenase family. As to quaternary structure, homotetramer. In response to mitochondrial stress, the precursor protein is ubiquitinated by the SIFI complex in the cytoplasm before mitochondrial import, leading to its degradation. Within the SIFI complex, UBR4 initiates ubiquitin chain that are further elongated or branched by KCMF1.

It is found in the mitochondrion matrix. The catalysed reaction is an aldehyde + NAD(+) + H2O = a carboxylate + NADH + 2 H(+). It participates in alcohol metabolism; ethanol degradation; acetate from ethanol: step 2/2. Required for clearance of cellular formaldehyde, a cytotoxic and carcinogenic metabolite that induces DNA damage. The protein is Aldehyde dehydrogenase, mitochondrial (Aldh2) of Rattus norvegicus (Rat).